The following is a 317-amino-acid chain: CXXC-type zinc finger protein 5 (317 aa).

Positions 1-49 are enriched in low complexity; it reads MSSLSSGPQDTGGSSSSSSNGSSGSGPKAGVADKSAAVAAAAPASVADD. The tract at residues 1 to 96 is disordered; sequence MSSLSSGPQD…GSGGGSMMGG (96 aa). The span at 83 to 94 shows a compositional bias: gly residues; it reads GGSGGSGGGSMM. The CXXC-type zinc finger occupies 251-292; that stretch reads GKKKRKRCGMCAPCRRRINCEQCSSCRNRKTGHQICKFRKCE. A Nuclear localization signal motif is present at residues 252–257; it reads KKKRKR. Zn(2+)-binding residues include Cys258, Cys261, Cys264, Cys270, Cys273, Cys276, Cys286, and Cys291.

As to quaternary structure, interacts with DVL1. Interacts with RBPJ.

It is found in the nucleus. It localises to the cytoplasm. May indirectly participate in activation of the NF-kappa-B and MAPK pathways. Acts as a mediator of BMP4-mediated modulation of canonical Wnt signaling activity in neural stem cells. Required for DNA damage-induced ATM phosphorylation, p53 activation and cell cycle arrest. Involved in myelopoiesis. Binds to the oxygen responsive element of COX4I2 and represses its transcription under hypoxia conditions (4% oxygen), as well as normoxia conditions (20% oxygen). May repress COX4I2 transactivation induced by CHCHD2 and RBPJ. Binds preferentially to DNA containing cytidine-phosphate-guanosine (CpG) dinucleotides over CpH (H=A, T, and C), hemimethylated-CpG and hemimethylated-hydroxymethyl-CpG. The protein is CXXC-type zinc finger protein 5 (CXXC5) of Bos taurus (Bovine).